The sequence spans 276 residues: Bifunctional protein FolD (276 aa).

Residues 157–159 (NRS), serine 182, and isoleucine 223 contribute to the NADP(+) site.

Belongs to the tetrahydrofolate dehydrogenase/cyclohydrolase family. Homodimer.

It catalyses the reaction (6R)-5,10-methylene-5,6,7,8-tetrahydrofolate + NADP(+) = (6R)-5,10-methenyltetrahydrofolate + NADPH. The enzyme catalyses (6R)-5,10-methenyltetrahydrofolate + H2O = (6R)-10-formyltetrahydrofolate + H(+). It participates in one-carbon metabolism; tetrahydrofolate interconversion. Functionally, catalyzes the oxidation of 5,10-methylenetetrahydrofolate to 5,10-methenyltetrahydrofolate and then the hydrolysis of 5,10-methenyltetrahydrofolate to 10-formyltetrahydrofolate. This is Bifunctional protein FolD from Thermoplasma acidophilum (strain ATCC 25905 / DSM 1728 / JCM 9062 / NBRC 15155 / AMRC-C165).